The primary structure comprises 69 residues: Pleurain-A4 (69 aa).

The signal sequence occupies residues 1 to 22 (MFTLKKTLLLLFFLGTISISLC). Residues 23 to 43 (KQERDADEDDGRKMTEEEVKR) constitute a propeptide that is removed on maturation. C63 and C69 are disulfide-bonded.

This sequence belongs to the frog skin active peptide (FSAP) family. Pleurain subfamily. Expressed by the skin glands.

The protein resides in the secreted. Functionally, antimicrobial peptide. Has activity against Gram-positive and -negative bacteria, and fungi. Has little hemolytic activity on red blood cells. This is Pleurain-A4 from Nidirana pleuraden (Yunnan pond frog).